The chain runs to 120 residues: Small ribosomal subunit protein uS13 (120 aa).

The disordered stretch occupies residues 93–120; that stretch reads RKGLPVRGQTTKNNARTRKGKKKTVGSK. The segment covering 107–120 has biased composition (basic residues); the sequence is ARTRKGKKKTVGSK.

Belongs to the universal ribosomal protein uS13 family. In terms of assembly, part of the 30S ribosomal subunit. Forms a loose heterodimer with protein S19. Forms two bridges to the 50S subunit in the 70S ribosome.

Located at the top of the head of the 30S subunit, it contacts several helices of the 16S rRNA. In the 70S ribosome it contacts the 23S rRNA (bridge B1a) and protein L5 of the 50S subunit (bridge B1b), connecting the 2 subunits; these bridges are implicated in subunit movement. Contacts the tRNAs in the A and P-sites. This chain is Small ribosomal subunit protein uS13, found in Helicobacter pylori (strain P12).